The following is a 572-amino-acid chain: 2-isopropylmalate synthase (572 aa).

A Pyruvate carboxyltransferase domain is found at 31–305 (PIWMSTDLRD…DPGLDFSNIN (275 aa)). Mg(2+)-binding residues include aspartate 40, histidine 244, histidine 246, and asparagine 280. The segment at 437–572 (NTAPIHYVGH…MNDAAESVGV (136 aa)) is regulatory domain.

The protein belongs to the alpha-IPM synthase/homocitrate synthase family. LeuA type 2 subfamily. In terms of assembly, homodimer. Requires Mg(2+) as cofactor.

It localises to the cytoplasm. It carries out the reaction 3-methyl-2-oxobutanoate + acetyl-CoA + H2O = (2S)-2-isopropylmalate + CoA + H(+). Its pathway is amino-acid biosynthesis; L-leucine biosynthesis; L-leucine from 3-methyl-2-oxobutanoate: step 1/4. Catalyzes the condensation of the acetyl group of acetyl-CoA with 3-methyl-2-oxobutanoate (2-ketoisovalerate) to form 3-carboxy-3-hydroxy-4-methylpentanoate (2-isopropylmalate). This Paraburkholderia phytofirmans (strain DSM 17436 / LMG 22146 / PsJN) (Burkholderia phytofirmans) protein is 2-isopropylmalate synthase.